The sequence spans 800 residues: Ent-copalyl diphosphate synthase 2 (800 aa).

A disordered region spans residues 52 to 80; the sequence is QGQETRERRQLDDDEHARPPQGGDDDVAA. The segment covering 55–69 has biased composition (basic and acidic residues); the sequence is ETRERRQLDDDEHAR. Lysine 242 serves as a coordination point for substrate. Residues aspartate 374 and aspartate 376 each contribute to the Mg(2+) site. A DXDD motif motif is present at residues 374-377; the sequence is DIDD. Lysine 461 provides a ligand contact to substrate.

It belongs to the terpene synthase family. The cofactor is Mg(2+).

The catalysed reaction is (2E,6E,10E)-geranylgeranyl diphosphate = ent-copalyl diphosphate. Catalyzes the conversion of geranylgeranyl diphosphate to the phytoalexin precursor ent-copalyl diphosphate. This is Ent-copalyl diphosphate synthase 2 (CPS2) from Oryza sativa subsp. indica (Rice).